Consider the following 206-residue polypeptide: MGYRDVAKVGLGGPVGSGKTALVQQLVPRLDDAGYDLGVIANDIMTQEDAQRLQSSFAGQIEKDLIAGVETGACPHTGIREDPSMNLDKIDEFSESHPELDVVLIESGGDNLAATFNPELADYFIFVISVAEGDDIPRKRGPGITQADLLVINKTDLAPHVDVSLEVLQEDAMEVRGDNPTAFTNCKTGEGIDDIMDIIERSVLFA.

13–20 (GPVGSGKT) is a GTP binding site.

This sequence belongs to the SIMIBI class G3E GTPase family. UreG subfamily. In terms of assembly, homodimer. UreD, UreF and UreG form a complex that acts as a GTP-hydrolysis-dependent molecular chaperone, activating the urease apoprotein by helping to assemble the nickel containing metallocenter of UreC. The UreE protein probably delivers the nickel.

The protein resides in the cytoplasm. Functionally, facilitates the functional incorporation of the urease nickel metallocenter. This process requires GTP hydrolysis, probably effectuated by UreG. This chain is Urease accessory protein UreG, found in Haloquadratum walsbyi (strain DSM 16790 / HBSQ001).